We begin with the raw amino-acid sequence, 227 residues long: 6-phosphogluconolactonase (227 aa).

The protein belongs to the glucosamine/galactosamine-6-phosphate isomerase family. 6-phosphogluconolactonase subfamily.

It catalyses the reaction 6-phospho-D-glucono-1,5-lactone + H2O = 6-phospho-D-gluconate + H(+). The protein operates within carbohydrate degradation; pentose phosphate pathway; D-ribulose 5-phosphate from D-glucose 6-phosphate (oxidative stage): step 2/3. Its function is as follows. Hydrolysis of 6-phosphogluconolactone to 6-phosphogluconate. The polypeptide is 6-phosphogluconolactonase (pgl) (Helicobacter pylori (strain ATCC 700392 / 26695) (Campylobacter pylori)).